The primary structure comprises 427 residues: uncharacterized protein (427 aa).

This sequence belongs to the MG032/MG096/MG288 family.

This is an uncharacterized protein from Mycoplasma pneumoniae (strain ATCC 29342 / M129 / Subtype 1) (Mycoplasmoides pneumoniae).